Reading from the N-terminus, the 58-residue chain is Small ribosomal subunit protein bS21 (58 aa).

The disordered stretch occupies residues 37 to 58 (FYEKPSVKRKRKSEAARKRKKF). The span at 43–58 (VKRKRKSEAARKRKKF) shows a compositional bias: basic residues.

This sequence belongs to the bacterial ribosomal protein bS21 family.

The protein is Small ribosomal subunit protein bS21 of Streptococcus sanguinis (strain SK36).